A 461-amino-acid chain; its full sequence is Cysteine--tRNA ligase (461 aa).

Cys-30 provides a ligand contact to Zn(2+). The 'HIGH' region motif lies at 32 to 42; the sequence is VTIYDLCHIGH. Cys-211, His-236, and Glu-240 together coordinate Zn(2+). Positions 268-272 match the 'KMSKS' region motif; the sequence is KMSKS. Lys-271 is a binding site for ATP.

It belongs to the class-I aminoacyl-tRNA synthetase family. As to quaternary structure, monomer. Zn(2+) is required as a cofactor.

It localises to the cytoplasm. The enzyme catalyses tRNA(Cys) + L-cysteine + ATP = L-cysteinyl-tRNA(Cys) + AMP + diphosphate. In Shewanella putrefaciens (strain CN-32 / ATCC BAA-453), this protein is Cysteine--tRNA ligase.